A 232-amino-acid chain; its full sequence is MAKISKRRQAFAAKVDRQKLYAIEDALSLVKECASAKFDESIDVAVQLGIDAKKSDQVVRGSVVLPAGTGKSVRVAVFAQGEKAEQARAAGAEIVGMEDLAEQIKAGQMDFDIVIASPDTMRIVGTLGQILGPRGLMPNPKVGTVTPDVATAVKNAKAGQVQFRVDKAGIIHATIGRASFEPTALRSNLSALIEALQKAKPATSKGVYLRKIALSSTMGVGVRVDQATLAAQ.

It belongs to the universal ribosomal protein uL1 family. Part of the 50S ribosomal subunit.

In terms of biological role, binds directly to 23S rRNA. The L1 stalk is quite mobile in the ribosome, and is involved in E site tRNA release. Its function is as follows. Protein L1 is also a translational repressor protein, it controls the translation of the L11 operon by binding to its mRNA. The chain is Large ribosomal subunit protein uL1 from Burkholderia cenocepacia (strain ATCC BAA-245 / DSM 16553 / LMG 16656 / NCTC 13227 / J2315 / CF5610) (Burkholderia cepacia (strain J2315)).